The primary structure comprises 155 residues: MSRRGTAEEKTAKSDPFYRNRLVNMLINRILKHGKKSLAYQLLYRTLKEVQKKTERNPLSILREAIRRVTPDIAVKARRKGGSTRQVPIEIGSTQGKALAIRWLLAASRKRPGGNMAFKFSSELVDASKGKGGAIRKKEETHKMAEANRTFAHFR.

This sequence belongs to the universal ribosomal protein uS7 family. In terms of assembly, part of the 30S ribosomal subunit.

It is found in the plastid. The protein localises to the chloroplast. In terms of biological role, one of the primary rRNA binding proteins, it binds directly to 16S rRNA where it nucleates assembly of the head domain of the 30S subunit. This chain is Small ribosomal subunit protein uS7cz/uS7cy (rps7-A), found in Jasminum nudiflorum (Winter jasmine).